Consider the following 714-residue polypeptide: Putative glutamine--fructose-6-phosphate aminotransferase [isomerizing] (714 aa).

The active-site Nucleophile; for GATase activity is the Cys2. The Glutamine amidotransferase type-2 domain maps to 2–321 (CGIFGYCNFL…DNDIAHIYDG (320 aa)). The segment covering 266 to 280 (STTSTFNHGSSTETP) has biased composition (polar residues). The tract at residues 266 to 285 (STTSTFNHGSSTETPAENGL) is disordered. SIS domains are found at residues 387-526 (WLTE…DLVS) and 559-704 (CDKK…VDLP).

It carries out the reaction D-fructose 6-phosphate + L-glutamine = D-glucosamine 6-phosphate + L-glutamate. It functions in the pathway nucleotide-sugar biosynthesis; UDP-N-acetyl-alpha-D-glucosamine biosynthesis; alpha-D-glucosamine 6-phosphate from D-fructose 6-phosphate: step 1/1. In terms of biological role, involved in amino sugar synthesis (formation of chitin, supplies the amino sugars of asparagine-linked oligosaccharides of glycoproteins). In Saccharomyces cerevisiae (strain YJM789) (Baker's yeast), this protein is Putative glutamine--fructose-6-phosphate aminotransferase [isomerizing].